The following is a 306-amino-acid chain: Formimidoylglutamase (306 aa).

Polar residues predominate over residues 1–13 (MFQNATDWTPTST). The disordered stretch occupies residues 1 to 36 (MFQNATDWTPTSTDPRDEQFGGVVEPVPTPSDADDY). 6 residues coordinate Mn(2+): Asn123, Asp147, His149, Asp151, Asp234, and Asp236.

Belongs to the arginase family. It depends on Mn(2+) as a cofactor.

The catalysed reaction is N-formimidoyl-L-glutamate + H2O = formamide + L-glutamate. The protein operates within amino-acid degradation; L-histidine degradation into L-glutamate; L-glutamate from N-formimidoyl-L-glutamate (hydrolase route): step 1/1. Catalyzes the conversion of N-formimidoyl-L-glutamate to L-glutamate and formamide. The protein is Formimidoylglutamase of Halobacterium salinarum (strain ATCC 29341 / DSM 671 / R1).